The primary structure comprises 216 residues: V-type ATP synthase subunit D (216 aa).

Belongs to the V-ATPase D subunit family.

Its function is as follows. Produces ATP from ADP in the presence of a proton gradient across the membrane. This chain is V-type ATP synthase subunit D, found in Clostridium botulinum (strain ATCC 19397 / Type A).